We begin with the raw amino-acid sequence, 112 residues long: Large ribosomal subunit protein uL22 (112 aa).

Belongs to the universal ribosomal protein uL22 family. In terms of assembly, part of the 50S ribosomal subunit.

This protein binds specifically to 23S rRNA; its binding is stimulated by other ribosomal proteins, e.g. L4, L17, and L20. It is important during the early stages of 50S assembly. It makes multiple contacts with different domains of the 23S rRNA in the assembled 50S subunit and ribosome. In terms of biological role, the globular domain of the protein is located near the polypeptide exit tunnel on the outside of the subunit, while an extended beta-hairpin is found that lines the wall of the exit tunnel in the center of the 70S ribosome. In Lawsonia intracellularis (strain PHE/MN1-00), this protein is Large ribosomal subunit protein uL22.